A 591-amino-acid polypeptide reads, in one-letter code: Ketol-acid reductoisomerase, chloroplastic (591 aa).

The disordered stretch occupies residues 1 to 20 (MAAATSSIAPSLSCPSPSSS). A chloroplast-targeting transit peptide spans 1-52 (MAAATSSIAPSLSCPSPSSSSKTLWSSKARTLALPNIGFLSSSSKSLRSLTA). Thr53 is modified (N-acetylthreonine). Positions 102-300 (VRGGRDLFKH…ALGSPFTFAT (199 aa)) constitute a KARI N-terminal Rossmann domain. Residues 123-130 (GVIGWGSQ), 156-161 (RKGSRS), and 195-199 (SDAAQ) contribute to the NADP(+) site. His220 is a catalytic residue. KARI C-terminal knotted domains follow at residues 301 to 449 (TLEQ…RPAG) and 450 to 586 (DLGP…RPEL). Mg(2+)-binding residues include Asp309, Glu313, Glu486, and Glu490. Ser512 lines the substrate pocket.

This sequence belongs to the ketol-acid reductoisomerase family. As to quaternary structure, homodimer. Mg(2+) serves as cofactor.

The protein localises to the plastid. It is found in the chloroplast. The enzyme catalyses (2R)-2,3-dihydroxy-3-methylbutanoate + NADP(+) = (2S)-2-acetolactate + NADPH + H(+). It carries out the reaction (2R,3R)-2,3-dihydroxy-3-methylpentanoate + NADP(+) = (S)-2-ethyl-2-hydroxy-3-oxobutanoate + NADPH + H(+). It functions in the pathway amino-acid biosynthesis; L-isoleucine biosynthesis; L-isoleucine from 2-oxobutanoate: step 2/4. The protein operates within amino-acid biosynthesis; L-valine biosynthesis; L-valine from pyruvate: step 2/4. The chain is Ketol-acid reductoisomerase, chloroplastic from Arabidopsis thaliana (Mouse-ear cress).